A 1107-amino-acid polypeptide reads, in one-letter code: OTU domain-containing protein 4 (1107 aa).

Methionine 1 is subject to N-acetylmethionine. The region spanning 34–155 is the OTU domain; sequence LYRKLVAKDG…GNHYDIVYPI (122 aa). The interval 39 to 45 is cys-loop; that stretch reads VAKDGSC. Aspartate 42 is a catalytic residue. Cysteine 45 (nucleophile) is an active-site residue. The segment at 94-104 is variable-loop; the sequence is LENPQEWVGQV. At tyrosine 120 the chain carries Phosphotyrosine. Serine 126 and serine 128 each carry phosphoserine. Threonine 131 carries the phosphothreonine modification. The his-loop stretch occupies residues 143–148; the sequence is FSNGNH. Histidine 148 is an active-site residue. Phosphoserine is present on residues serine 166, serine 199, serine 202, and serine 204. Over residues 195 to 206 the composition is skewed to acidic residues; the sequence is EESNSEISDSED. Disordered stretches follow at residues 195-239 and 322-431; these read EESN…SADL and KHTP…DFDH. The span at 226 to 236 shows a compositional bias: polar residues; that stretch reads GSENPKNNGNS. Serine 340 carries the phosphoserine modification. Positions 392-403 are enriched in low complexity; that stretch reads SSHSTGSQSQKS. Positions 419–431 are enriched in basic and acidic residues; it reads RKPDRERAEDFDH. Tyrosine 438 bears the Phosphotyrosine mark. Phosphoserine is present on serine 442. Residue tyrosine 459 is modified to Phosphotyrosine. The interval 470-568 is disordered; sequence PALSSSSVSQ…KPAEHIPLSN (99 aa). Residues 473–486 are compositionally biased toward low complexity; sequence SSSSVSQSPSQNSN. A compositionally biased stretch (basic and acidic residues) spans 495–528; sequence HARDRKGSMRRADAEERKDKDSLRGHTHVDKKPE. Phosphoserine is present on residues serine 544 and serine 895. The interval 918 to 1107 is disordered; that stretch reads LSAASVSSKH…MGDGHRGQHT (190 aa). Positions 963–994 are enriched in basic and acidic residues; that stretch reads NREREPGSAEPEPKRTIQSLKEKPEKVKDPKT. 4 positions are modified to phosphoserine: serine 1000, serine 1005, serine 1016, and serine 1017. The segment covering 1032–1041 has biased composition (polar residues); that stretch reads SKQFYNQTYG. A Phosphoserine modification is found at serine 1042. 2 stretches are compositionally biased toward basic and acidic residues: residues 1060 to 1079 and 1089 to 1107; these read VRGE…EGYQ and YRGD…GQHT.

Interacts with MYD88; the interaction is direct. Interacts with ALKBH3; the interaction is direct. Interacts with USP7; the interaction is direct. Interacts with USP9X; the interaction is direct. Post-translationally, phosphorylation at Ser-202 and Ser-204 activates 'Lys-63'-specific deubiquitinase activity. Induced upon stimulation with IL1B.

Its subcellular location is the cytoplasm. It is found in the nucleus. It carries out the reaction Thiol-dependent hydrolysis of ester, thioester, amide, peptide and isopeptide bonds formed by the C-terminal Gly of ubiquitin (a 76-residue protein attached to proteins as an intracellular targeting signal).. Phosphorylation on Ser-202 and Ser-204 induces 'Lys-63'-specific deubiquitinase activity. Functionally, deubiquitinase which hydrolyzes the isopeptide bond between the ubiquitin C-terminus and the lysine epsilon-amino group of the target protein. May negatively regulate inflammatory and pathogen recognition signaling in innate immune response. Upon phosphorylation at Ser-202 and Ser-204 residues, via IL-1 receptor and Toll-like receptor signaling pathway, specifically deubiquitinates 'Lys-63'-polyubiquitinated MYD88 adapter protein triggering down-regulation of NF-kappa-B-dependent transcription of inflammatory mediators. Independently of the catalytic activity, acts as a scaffold for alternative deubiquitinases to assemble specific deubiquitinase-substrate complexes. Associates with USP7 and USP9X deubiquitinases to stabilize alkylation repair enzyme ALKBH3, thereby promoting the repair of alkylated DNA lesions. This Mus musculus (Mouse) protein is OTU domain-containing protein 4.